Reading from the N-terminus, the 123-residue chain is Large ribosomal subunit protein uL29 (123 aa).

Lys19 carries the post-translational modification N6-acetyllysine. Residue Lys25 forms a Glycyl lysine isopeptide (Lys-Gly) (interchain with G-Cter in SUMO2) linkage. At Ser29 the chain carries Phosphoserine. Lys43 carries the N6-acetyllysine modification. Residues Pro85 to Ala123 form a disordered region. Residues Lys86–Asn96 are compositionally biased toward basic residues.

This sequence belongs to the universal ribosomal protein uL29 family. In terms of assembly, component of the large ribosomal subunit.

It is found in the cytoplasm. Component of the large ribosomal subunit. The ribosome is a large ribonucleoprotein complex responsible for the synthesis of proteins in the cell. This Oryctolagus cuniculus (Rabbit) protein is Large ribosomal subunit protein uL29 (RPL35).